A 1368-amino-acid polypeptide reads, in one-letter code: DNA-directed RNA polymerase subunit beta (1368 aa).

The protein belongs to the RNA polymerase beta chain family. In terms of assembly, the RNAP catalytic core consists of 2 alpha, 1 beta, 1 beta' and 1 omega subunit. When a sigma factor is associated with the core the holoenzyme is formed, which can initiate transcription.

The enzyme catalyses RNA(n) + a ribonucleoside 5'-triphosphate = RNA(n+1) + diphosphate. Its function is as follows. DNA-dependent RNA polymerase catalyzes the transcription of DNA into RNA using the four ribonucleoside triphosphates as substrates. The protein is DNA-directed RNA polymerase subunit beta of Paraburkholderia xenovorans (strain LB400).